Reading from the N-terminus, the 411-residue chain is cAMP-dependent protein kinase regulatory subunit (411 aa).

The segment at 1–144 (MAESAFPSAQ…SWTPPYHEKT (144 aa)) is disordered. Residues 23–159 (AAFQKISEED…RLKTAVSSNF (137 aa)) are dimerization and phosphorylation. Residues 46–58 (SANAAAASSSTGS) show a composition bias toward low complexity. Residues 85 to 96 (EEDEEGADEFPP) are compositionally biased toward acidic residues. The span at 119-136 (TSVSAESLNPTSAGSDSW) shows a compositional bias: polar residues. S120 carries the post-translational modification Phosphoserine. 3',5'-cyclic AMP-binding positions include 160 to 289 (LFSH…FLEE), E238, R247, 292 to 411 (LLSS…PVPA), E359, and R368.

It belongs to the cAMP-dependent kinase regulatory chain family. Tetramer, composed of 2 regulatory (R) and 2 catalytic (C) subunits. In the presence of cAMP it dissociates into 2 active monomeric C subunits and an R dimer.

This chain is cAMP-dependent protein kinase regulatory subunit (pkaR), found in Aspergillus niger.